The sequence spans 327 residues: Malate dehydrogenase (327 aa).

Glycine 11 to serine 17 provides a ligand contact to NAD(+). 2 residues coordinate substrate: arginine 92 and arginine 98. NAD(+) is bound by residues asparagine 105, glutamine 112, and valine 129–asparagine 131. Substrate is bound by residues asparagine 131 and arginine 162. Histidine 187 acts as the Proton acceptor in catalysis.

Belongs to the LDH/MDH superfamily. MDH type 2 family.

The catalysed reaction is (S)-malate + NAD(+) = oxaloacetate + NADH + H(+). Its function is as follows. Catalyzes the reversible oxidation of malate to oxaloacetate. This chain is Malate dehydrogenase, found in Nitrosomonas europaea (strain ATCC 19718 / CIP 103999 / KCTC 2705 / NBRC 14298).